Consider the following 78-residue polypeptide: D-alanyl carrier protein (78 aa).

The Carrier domain maps to 1–78 (MDVENTVVEI…KIIAKAKELQ (78 aa)). An O-(pantetheine 4'-phosphoryl)serine modification is found at Ser36.

This sequence belongs to the DltC family. 4'-phosphopantetheine is transferred from CoA to a specific serine of apo-DCP.

The protein resides in the cytoplasm. Its pathway is cell wall biogenesis; lipoteichoic acid biosynthesis. Functionally, carrier protein involved in the D-alanylation of lipoteichoic acid (LTA). The loading of thioester-linked D-alanine onto DltC is catalyzed by D-alanine--D-alanyl carrier protein ligase DltA. The DltC-carried D-alanyl group is further transferred to cell membrane phosphatidylglycerol (PG) by forming an ester bond, probably catalyzed by DltD. D-alanylation of LTA plays an important role in modulating the properties of the cell wall in Gram-positive bacteria, influencing the net charge of the cell wall. The protein is D-alanyl carrier protein of Latilactobacillus sakei subsp. sakei (strain 23K) (Lactobacillus sakei subsp. sakei).